Reading from the N-terminus, the 333-residue chain is MKKRHLLIAGLACMTILGACNNDDAGSSGQAVVEVDGHEISDAEFVDMLKERYGEAILQELVQRHLISQAADSVEIPQEEIDEELETFKSQIGVETDDEMLDALSNQFGITVENKEEFVNEYILPPLVLEKLAVEGVEITDEEKQAYFDENRDSLIEVEASHILVEDEETAEEVLDRLEAGDDFAELASEYSVDPSAEANNGDLGFFGKGDMVPEFEEAAFNMEIDEVSEPVESTYGYHIILVTDRKDSYEELEEKIHDTLMRERSRTQEEVLRDLLAQADINVLDDQFEGLFDLPDAPPVEDTPEIDGEDASDEAEDQAEDADENAEEEDES.

The signal sequence occupies residues 1 to 19 (MKKRHLLIAGLACMTILGA). The N-palmitoyl cysteine moiety is linked to residue Cys20. The S-diacylglycerol cysteine moiety is linked to residue Cys20. Residues 155–245 (LIEVEASHIL…YGYHIILVTD (91 aa)) form the PpiC domain. The tract at residues 291 to 333 (GLFDLPDAPPVEDTPEIDGEDASDEAEDQAEDADENAEEEDES) is disordered. Residues 303-333 (DTPEIDGEDASDEAEDQAEDADENAEEEDES) are compositionally biased toward acidic residues.

This sequence belongs to the PrsA family.

It localises to the cell membrane. The catalysed reaction is [protein]-peptidylproline (omega=180) = [protein]-peptidylproline (omega=0). Functionally, plays a major role in protein secretion by helping the post-translocational extracellular folding of several secreted proteins. The sequence is that of Foldase protein PrsA from Halalkalibacterium halodurans (strain ATCC BAA-125 / DSM 18197 / FERM 7344 / JCM 9153 / C-125) (Bacillus halodurans).